The chain runs to 420 residues: Glucose-1-phosphate adenylyltransferase (420 aa).

Alpha-D-glucose 1-phosphate contacts are provided by residues Tyr107, Gly172, 187 to 188 (EK), and Ser205.

This sequence belongs to the bacterial/plant glucose-1-phosphate adenylyltransferase family. Homotetramer.

It carries out the reaction alpha-D-glucose 1-phosphate + ATP + H(+) = ADP-alpha-D-glucose + diphosphate. It functions in the pathway glycan biosynthesis; glycogen biosynthesis. In terms of biological role, involved in the biosynthesis of ADP-glucose, a building block required for the elongation reactions to produce glycogen. Catalyzes the reaction between ATP and alpha-D-glucose 1-phosphate (G1P) to produce pyrophosphate and ADP-Glc. The sequence is that of Glucose-1-phosphate adenylyltransferase from Agrobacterium fabrum (strain C58 / ATCC 33970) (Agrobacterium tumefaciens (strain C58)).